The sequence spans 76 residues: Large ribosomal subunit protein bL31 (76 aa).

Belongs to the bacterial ribosomal protein bL31 family. Type A subfamily. Part of the 50S ribosomal subunit.

Binds the 23S rRNA. This Rhizorhabdus wittichii (strain DSM 6014 / CCUG 31198 / JCM 15750 / NBRC 105917 / EY 4224 / RW1) (Sphingomonas wittichii) protein is Large ribosomal subunit protein bL31.